An 850-amino-acid chain; its full sequence is Probable beta-glucosidase J (850 aa).

N-linked (GlcNAc...) asparagine glycosylation is found at Asn-43 and Asn-52. Asp-254 is an active-site residue. The region spanning Thr-423 to Val-583 is the PA14 domain. Asn-508 carries an N-linked (GlcNAc...) asparagine glycan.

Belongs to the glycosyl hydrolase 3 family.

It is found in the secreted. It catalyses the reaction Hydrolysis of terminal, non-reducing beta-D-glucosyl residues with release of beta-D-glucose.. It functions in the pathway glycan metabolism; cellulose degradation. Functionally, beta-glucosidases are one of a number of cellulolytic enzymes involved in the degradation of cellulosic biomass. Catalyzes the last step releasing glucose from the inhibitory cellobiose. The chain is Probable beta-glucosidase J (bglJ) from Emericella nidulans (strain FGSC A4 / ATCC 38163 / CBS 112.46 / NRRL 194 / M139) (Aspergillus nidulans).